Here is a 517-residue protein sequence, read N- to C-terminus: Cytochrome b mRNA maturase bI3 (517 aa).

At 1–31 the chain is on the mitochondrial matrix side; the sequence is MAFRKSNVYLSLVNSYIIDSPQPSSINYWWN. The tract at residues 1 to 169 is cytochrome b; sequence MAFRKSNVYL…DIVSWLWGGF (169 aa). The chain crosses the membrane as a helical span at residues 32 to 52; it reads MGSLLGLCLVIQIVTGIFMAM. Residues 53–84 are Mitochondrial intermembrane-facing; it reads HYSSNIELAFSSVEHIMRDVHNGYILRYLHAN. The chain crosses the membrane as a helical span at residues 85–105; the sequence is GASFFFMVMFMHMAKGLYYGS. At 106–115 the chain is on the mitochondrial matrix side; sequence YRSPRVTLWN. A helical transmembrane segment spans residues 116-136; that stretch reads VGVIIFILTIATAFLGYCCVY. The Mitochondrial intermembrane portion of the chain corresponds to 137–145; that stretch reads GQMSHWGAT. Residues 146 to 166 form a helical membrane-spanning segment; sequence VITNLFSAIPFVGNDIVSWLW. Topologically, residues 167–184 are mitochondrial matrix; it reads GGFNMEDPYYSNMMLNKS. The segment at 170–517 is maturase; it reads NMEDPYYSNM…NNYFKIPPKY (348 aa). Residues 185–205 form a helical membrane-spanning segment; that stretch reads VLCWNIFIWMMNYYIIQLIIY. Topologically, residues 206–224 are mitochondrial intermembrane; the sequence is NNMIWNKNNMVKMFIMRRK. Residues 225–242 form a helical membrane-spanning segment; sequence LAVINMYMYMKLIIQRTY. The Mitochondrial matrix segment spans residues 243 to 517; that stretch reads SYYMNNTIIY…NNYFKIPPKY (275 aa).

In the N-terminal section; belongs to the cytochrome b family. This sequence in the C-terminal section; belongs to the LAGLIDADG endonuclease family. As to quaternary structure, forms a ribonucleoprotein complex composed of maturase bI3 and 2 dimers of MRS1 that assemble around the bI3 RNA.

The protein resides in the mitochondrion inner membrane. Mitochondrial mRNA maturase required for splicing of intron 3 of the cytochrome b (COB) gene, containing its own coding sequence. In vivo splicing requires the formation of a ribonucleoprotein complex together with the imported mitochondrial RNA-splicing protein MRS1. The complex seems to stimulate the intrinsic ribozyme activity of intron bI3 through binding to and stabilizing specific secondary and tertiary structure elements in the RNA. The polypeptide is Cytochrome b mRNA maturase bI3 (BI3) (Saccharomyces cerevisiae (strain ATCC 204508 / S288c) (Baker's yeast)).